Here is a 513-residue protein sequence, read N- to C-terminus: Glycogen synthase (513 aa).

Lysine 47 contributes to the ADP-alpha-D-glucose binding site.

The protein belongs to the glycosyltransferase 1 family. Bacterial/plant glycogen synthase subfamily.

It catalyses the reaction [(1-&gt;4)-alpha-D-glucosyl](n) + ADP-alpha-D-glucose = [(1-&gt;4)-alpha-D-glucosyl](n+1) + ADP + H(+). It participates in glycan biosynthesis; glycogen biosynthesis. Functionally, synthesizes alpha-1,4-glucan chains using ADP-glucose. The polypeptide is Glycogen synthase (Pseudomonas paraeruginosa (strain DSM 24068 / PA7) (Pseudomonas aeruginosa (strain PA7))).